The primary structure comprises 98 residues: N(2)-fixation sustaining protein CowN (98 aa).

This sequence belongs to the CowN family.

Is required to sustain N(2)-dependent growth in the presence of low levels of carbon monoxide (CO). Probably acts by protecting the N(2) fixation ability of the nitrogenase complex, which is inactivated in the presence of CO. In Azospirillum sp. (strain B510), this protein is N(2)-fixation sustaining protein CowN.